A 257-amino-acid chain; its full sequence is Thiazole synthase (257 aa).

The active-site Schiff-base intermediate with DXP is the Lys97. 1-deoxy-D-xylulose 5-phosphate-binding positions include Gly158, 184 to 185, and 206 to 207; these read AG and NT.

It belongs to the ThiG family. Homotetramer. Forms heterodimers with either ThiH or ThiS.

Its subcellular location is the cytoplasm. The enzyme catalyses [ThiS sulfur-carrier protein]-C-terminal-Gly-aminoethanethioate + 2-iminoacetate + 1-deoxy-D-xylulose 5-phosphate = [ThiS sulfur-carrier protein]-C-terminal Gly-Gly + 2-[(2R,5Z)-2-carboxy-4-methylthiazol-5(2H)-ylidene]ethyl phosphate + 2 H2O + H(+). The protein operates within cofactor biosynthesis; thiamine diphosphate biosynthesis. Functionally, catalyzes the rearrangement of 1-deoxy-D-xylulose 5-phosphate (DXP) to produce the thiazole phosphate moiety of thiamine. Sulfur is provided by the thiocarboxylate moiety of the carrier protein ThiS. In vitro, sulfur can be provided by H(2)S. The sequence is that of Thiazole synthase from Phocaeicola vulgatus (strain ATCC 8482 / DSM 1447 / JCM 5826 / CCUG 4940 / NBRC 14291 / NCTC 11154) (Bacteroides vulgatus).